The sequence spans 270 residues: Sec-independent protein translocase protein TatC (270 aa).

Helical transmembrane passes span 25 to 45 (FIAV…LFDI), 75 to 95 (VSLL…FWMF), 111 to 131 (VVIL…FIVF), 156 to 176 (LGFA…PLVL), 195 to 211 (KYAI…ITPP), and 213 to 233 (VVTQ…SIIG). The disordered stretch occupies residues 243 to 270 (SDEEEAAENSDVQTDKSTDDTTPGEDQN).

Belongs to the TatC family. As to quaternary structure, the Tat system comprises two distinct complexes: a TatABC complex, containing multiple copies of TatA, TatB and TatC subunits, and a separate TatA complex, containing only TatA subunits. Substrates initially bind to the TatABC complex, which probably triggers association of the separate TatA complex to form the active translocon.

It localises to the cell inner membrane. In terms of biological role, part of the twin-arginine translocation (Tat) system that transports large folded proteins containing a characteristic twin-arginine motif in their signal peptide across membranes. Together with TatB, TatC is part of a receptor directly interacting with Tat signal peptides. The protein is Sec-independent protein translocase protein TatC of Desulforapulum autotrophicum (strain ATCC 43914 / DSM 3382 / VKM B-1955 / HRM2) (Desulfobacterium autotrophicum).